A 1069-amino-acid polypeptide reads, in one-letter code: Carbamoyl phosphate synthase large chain (1069 aa).

A carboxyphosphate synthetic domain region spans residues 1-401 (MPLNKDIKKV…AFLKGIRSLE (401 aa)). Residues R129, R169, G175, G176, K208, V210, E215, G241, I242, H243, Q284, and E298 each coordinate ATP. An ATP-grasp 1 domain is found at 133-327 (RDMMNRIGEP…IAKLAAKIAL (195 aa)). Positions 284, 298, and 300 each coordinate Mg(2+). Residues Q284, E298, and N300 each coordinate Mn(2+). The tract at residues 402-549 (IGKYSLDHKK…YSTYEQYDEV (148 aa)) is oligomerization domain. The carbamoyl phosphate synthetic domain stretch occupies residues 550–932 (EVSNRRKVIV…ALYKGFVGAN (383 aa)). The ATP-grasp 2 domain maps to 674-864 (DELLERLDIS…IVDIATQVMM (191 aa)). ATP-binding residues include R710, K749, L751, E755, G780, V781, H782, S783, Q823, and E835. Mg(2+)-binding residues include Q823, E835, and N837. Residues Q823, E835, and N837 each coordinate Mn(2+). Residues 932-1069 (NMYPSKEKGK…KDLEVFDITK (138 aa)) form the MGS-like domain. Positions 933–1069 (MYPSKEKGKI…KDLEVFDITK (137 aa)) are allosteric domain.

Belongs to the CarB family. Composed of two chains; the small (or glutamine) chain promotes the hydrolysis of glutamine to ammonia, which is used by the large (or ammonia) chain to synthesize carbamoyl phosphate. Tetramer of heterodimers (alpha,beta)4. Mg(2+) serves as cofactor. The cofactor is Mn(2+).

The catalysed reaction is hydrogencarbonate + L-glutamine + 2 ATP + H2O = carbamoyl phosphate + L-glutamate + 2 ADP + phosphate + 2 H(+). The enzyme catalyses hydrogencarbonate + NH4(+) + 2 ATP = carbamoyl phosphate + 2 ADP + phosphate + 2 H(+). Its pathway is amino-acid biosynthesis; L-arginine biosynthesis; carbamoyl phosphate from bicarbonate: step 1/1. The protein operates within pyrimidine metabolism; UMP biosynthesis via de novo pathway; (S)-dihydroorotate from bicarbonate: step 1/3. In terms of biological role, large subunit of the glutamine-dependent carbamoyl phosphate synthetase (CPSase). CPSase catalyzes the formation of carbamoyl phosphate from the ammonia moiety of glutamine, carbonate, and phosphate donated by ATP, constituting the first step of 2 biosynthetic pathways, one leading to arginine and/or urea and the other to pyrimidine nucleotides. The large subunit (synthetase) binds the substrates ammonia (free or transferred from glutamine from the small subunit), hydrogencarbonate and ATP and carries out an ATP-coupled ligase reaction, activating hydrogencarbonate by forming carboxy phosphate which reacts with ammonia to form carbamoyl phosphate. This chain is Carbamoyl phosphate synthase large chain, found in Clostridium botulinum (strain Eklund 17B / Type B).